The following is a 268-amino-acid chain: Small ribosomal subunit protein uS10m (268 aa).

A mitochondrion-targeting transit peptide spans 1-64 (MIIRPVVRSL…RITTTTEAPK (64 aa)).

The protein belongs to the universal ribosomal protein uS10 family. In terms of assembly, component of the mitochondrial small ribosomal subunit (mt-SSU). Mature N.crassa 74S mitochondrial ribosomes consist of a small (37S) and a large (54S) subunit. The 37S small subunit contains a 16S ribosomal RNA (16S mt-rRNA) and 32 different proteins. The 54S large subunit contains a 23S rRNA (23S mt-rRNA) and 42 different proteins.

The protein localises to the mitochondrion. In terms of biological role, component of the mitochondrial ribosome (mitoribosome), a dedicated translation machinery responsible for the synthesis of mitochondrial genome-encoded proteins, including at least some of the essential transmembrane subunits of the mitochondrial respiratory chain. The mitoribosomes are attached to the mitochondrial inner membrane and translation products are cotranslationally integrated into the membrane. The polypeptide is Small ribosomal subunit protein uS10m (mrp-10) (Neurospora crassa (strain ATCC 24698 / 74-OR23-1A / CBS 708.71 / DSM 1257 / FGSC 987)).